The primary structure comprises 86 residues: Mu-theraphotoxin-Cg2a 2 (86 aa).

Residues 1–21 (MKVSVVITLAVLGVMFVWASA) form the signal peptide. A propeptide spanning residues 22 to 50 (AELEERGSDQRDSPAWIKSMERIFQSEER) is cleaved from the precursor. Disulfide bonds link C52–C66, C59–C71, and C65–C78. At F84 the chain carries Phenylalanine amide.

It belongs to the neurotoxin 10 (Hwtx-1) family. 37 (Jztx-31) subfamily. In terms of tissue distribution, expressed by the venom gland.

Its subcellular location is the secreted. Functionally, inhibits both peak current and fast inactivation of voltage-gated sodium channels (Nav) channels. Inhibits the inactivation of Nav on DRG neurons (EC(50)=1.77 uM) and peak current of cardiac myocytes (IC(50)=0.90 uM). The sequence is that of Mu-theraphotoxin-Cg2a 2 from Chilobrachys guangxiensis (Chinese earth tiger tarantula).